Consider the following 208-residue polypeptide: Small ribosomal subunit protein uS3 (208 aa).

The KH type-2 domain maps to Ile38 to Arg106.

The protein belongs to the universal ribosomal protein uS3 family. As to quaternary structure, part of the 30S ribosomal subunit. Forms a tight complex with proteins S10 and S14.

Functionally, binds the lower part of the 30S subunit head. Binds mRNA in the 70S ribosome, positioning it for translation. This is Small ribosomal subunit protein uS3 from Syntrophobacter fumaroxidans (strain DSM 10017 / MPOB).